Reading from the N-terminus, the 116-residue chain is NADH-ubiquinone oxidoreductase chain 3 (116 aa).

Helical transmembrane passes span 3–23 (LVTT…TISF), 56–76 (FFLI…LLPL), and 84–104 (APTL…LGLI).

Belongs to the complex I subunit 3 family.

It is found in the mitochondrion membrane. The enzyme catalyses a ubiquinone + NADH + 5 H(+)(in) = a ubiquinol + NAD(+) + 4 H(+)(out). In terms of biological role, core subunit of the mitochondrial membrane respiratory chain NADH dehydrogenase (Complex I) that is believed to belong to the minimal assembly required for catalysis. Complex I functions in the transfer of electrons from NADH to the respiratory chain. The immediate electron acceptor for the enzyme is believed to be ubiquinone. This is NADH-ubiquinone oxidoreductase chain 3 (MT-ND3) from Oncorhynchus nerka (Sockeye salmon).